The following is a 165-amino-acid chain: Phosphopantetheine adenylyltransferase (165 aa).

Residue serine 9 participates in substrate binding. ATP is bound by residues 9-10 (SF) and histidine 17. Substrate-binding residues include lysine 41, valine 73, and arginine 87. ATP contacts are provided by residues 88-90 (GLR), glutamate 98, and 123-129 (FTLLSSS).

It belongs to the bacterial CoaD family. In terms of assembly, homohexamer. It depends on Mg(2+) as a cofactor.

The protein localises to the cytoplasm. It carries out the reaction (R)-4'-phosphopantetheine + ATP + H(+) = 3'-dephospho-CoA + diphosphate. It functions in the pathway cofactor biosynthesis; coenzyme A biosynthesis; CoA from (R)-pantothenate: step 4/5. In terms of biological role, reversibly transfers an adenylyl group from ATP to 4'-phosphopantetheine, yielding dephospho-CoA (dPCoA) and pyrophosphate. This is Phosphopantetheine adenylyltransferase from Herpetosiphon aurantiacus (strain ATCC 23779 / DSM 785 / 114-95).